The following is a 143-amino-acid chain: Large ribosomal subunit protein uL16 (143 aa).

Belongs to the universal ribosomal protein uL16 family. Part of the 50S ribosomal subunit.

In terms of biological role, binds 23S rRNA and is also seen to make contacts with the A and possibly P site tRNAs. The protein is Large ribosomal subunit protein uL16 of Thermosynechococcus vestitus (strain NIES-2133 / IAM M-273 / BP-1).